We begin with the raw amino-acid sequence, 627 residues long: Serine/threonine-protein phosphatase 2A 56 kDa regulatory subunit delta 2 isoform (627 aa).

The disordered stretch occupies residues 1 to 37 (MKGLRSKFVKALSLKDEQGSHKNGHSKSHYISKNGSY).

This sequence belongs to the phosphatase 2A regulatory subunit B family. In terms of assembly, PP2A consists of a common heterodimeric core enzyme, composed of a 36 kDa catalytic subunit (subunit C) and a 65 kDa constant regulatory subunit (PR65 or subunit A), that associates with a variety of regulatory subunits. Proteins that associate with the core dimer include three families of regulatory subunits B (the R2/B/PR55/B55, R3/B''/PR72/PR130/PR59 and R5/B'/B56 families), the 48 kDa variable regulatory subunit, viral proteins, and cell signaling molecules.

It is found in the cytoplasm. The protein localises to the cell tip. Functionally, the B regulatory subunit might modulate substrate selectivity and catalytic activity, and might also direct the localization of the catalytic enzyme to a particular subcellular compartment. Has a role in cell shape control and septum formation. The chain is Serine/threonine-protein phosphatase 2A 56 kDa regulatory subunit delta 2 isoform (par2) from Schizosaccharomyces pombe (strain 972 / ATCC 24843) (Fission yeast).